We begin with the raw amino-acid sequence, 156 residues long: Ribonuclease H (156 aa).

Residues 2-144 (SQFDVTVFTD…CDVLARAQAS (143 aa)) enclose the RNase H type-1 domain. Positions 11, 49, 71, and 136 each coordinate Mg(2+).

It belongs to the RNase H family. Monomer. It depends on Mg(2+) as a cofactor.

It localises to the cytoplasm. It catalyses the reaction Endonucleolytic cleavage to 5'-phosphomonoester.. Its function is as follows. Endonuclease that specifically degrades the RNA of RNA-DNA hybrids. The sequence is that of Ribonuclease H from Nitratidesulfovibrio vulgaris (strain ATCC 29579 / DSM 644 / CCUG 34227 / NCIMB 8303 / VKM B-1760 / Hildenborough) (Desulfovibrio vulgaris).